A 300-amino-acid chain; its full sequence is Ribosomal protein L11 methyltransferase (300 aa).

Residues threonine 152, glycine 173, aspartate 195, and asparagine 234 each coordinate S-adenosyl-L-methionine.

The protein belongs to the methyltransferase superfamily. PrmA family.

It localises to the cytoplasm. It catalyses the reaction L-lysyl-[protein] + 3 S-adenosyl-L-methionine = N(6),N(6),N(6)-trimethyl-L-lysyl-[protein] + 3 S-adenosyl-L-homocysteine + 3 H(+). Methylates ribosomal protein L11. This is Ribosomal protein L11 methyltransferase from Burkholderia ambifaria (strain MC40-6).